The following is a 700-amino-acid chain: DNA ligase (700 aa).

Residues 42 to 46 (DDEYD), 91 to 92 (SL), and E126 contribute to the NAD(+) site. K128 functions as the N6-AMP-lysine intermediate in the catalytic mechanism. The NAD(+) site is built by R149, E184, K300, and K324. Zn(2+) is bound by residues C418, C421, C436, and C441. A BRCT domain is found at 598 to 686 (TRTDQLSGLN…GLGERGVAED (89 aa)).

The protein belongs to the NAD-dependent DNA ligase family. LigA subfamily. Requires Mn(2+) as cofactor.

The enzyme catalyses NAD(+) + (deoxyribonucleotide)n-3'-hydroxyl + 5'-phospho-(deoxyribonucleotide)m = (deoxyribonucleotide)n+m + AMP + beta-nicotinamide D-nucleotide.. In terms of biological role, DNA ligase that catalyzes the formation of phosphodiester linkages between 5'-phosphoryl and 3'-hydroxyl groups in double-stranded DNA using NAD as a coenzyme and as the energy source for the reaction. It is essential for DNA replication and repair of damaged DNA. The chain is DNA ligase from Deinococcus radiodurans (strain ATCC 13939 / DSM 20539 / JCM 16871 / CCUG 27074 / LMG 4051 / NBRC 15346 / NCIMB 9279 / VKM B-1422 / R1).